A 445-amino-acid polypeptide reads, in one-letter code: Probable glycine dehydrogenase (decarboxylating) subunit 1 (445 aa).

It belongs to the GcvP family. N-terminal subunit subfamily. The glycine cleavage system is composed of four proteins: P, T, L and H. In this organism, the P 'protein' is a heterodimer of two subunits.

The enzyme catalyses N(6)-[(R)-lipoyl]-L-lysyl-[glycine-cleavage complex H protein] + glycine + H(+) = N(6)-[(R)-S(8)-aminomethyldihydrolipoyl]-L-lysyl-[glycine-cleavage complex H protein] + CO2. In terms of biological role, the glycine cleavage system catalyzes the degradation of glycine. The P protein binds the alpha-amino group of glycine through its pyridoxal phosphate cofactor; CO(2) is released and the remaining methylamine moiety is then transferred to the lipoamide cofactor of the H protein. The chain is Probable glycine dehydrogenase (decarboxylating) subunit 1 from Anaeromyxobacter sp. (strain Fw109-5).